The sequence spans 193 residues: Xanthine phosphoribosyltransferase (193 aa).

Xanthine is bound by residues Leu20 and Thr27. Ala128–Ala132 serves as a coordination point for 5-phospho-alpha-D-ribose 1-diphosphate. Lys156 contacts xanthine.

It belongs to the purine/pyrimidine phosphoribosyltransferase family. Xpt subfamily. Homodimer.

It localises to the cytoplasm. It catalyses the reaction XMP + diphosphate = xanthine + 5-phospho-alpha-D-ribose 1-diphosphate. It participates in purine metabolism; XMP biosynthesis via salvage pathway; XMP from xanthine: step 1/1. Converts the preformed base xanthine, a product of nucleic acid breakdown, to xanthosine 5'-monophosphate (XMP), so it can be reused for RNA or DNA synthesis. This is Xanthine phosphoribosyltransferase from Streptococcus agalactiae serotype Ia (strain ATCC 27591 / A909 / CDC SS700).